Reading from the N-terminus, the 874-residue chain is Probable inorganic carbon transporter subunit DabA (874 aa).

Residues cysteine 398, aspartate 400, histidine 580, and cysteine 595 each contribute to the Zn(2+) site.

Belongs to the inorganic carbon transporter (TC 9.A.2) DabA family. Forms a complex with DabB. Zn(2+) serves as cofactor.

Its subcellular location is the cell membrane. Its function is as follows. Part of an energy-coupled inorganic carbon pump. This chain is Probable inorganic carbon transporter subunit DabA, found in Bacillus cereus (strain ATCC 10987 / NRS 248).